Reading from the N-terminus, the 471-residue chain is 3-isopropylmalate dehydratase large subunit (471 aa).

The [4Fe-4S] cluster site is built by Cys-347, Cys-407, and Cys-410.

The protein belongs to the aconitase/IPM isomerase family. LeuC type 1 subfamily. In terms of assembly, heterodimer of LeuC and LeuD. It depends on [4Fe-4S] cluster as a cofactor.

It carries out the reaction (2R,3S)-3-isopropylmalate = (2S)-2-isopropylmalate. The protein operates within amino-acid biosynthesis; L-leucine biosynthesis; L-leucine from 3-methyl-2-oxobutanoate: step 2/4. Functionally, catalyzes the isomerization between 2-isopropylmalate and 3-isopropylmalate, via the formation of 2-isopropylmaleate. The protein is 3-isopropylmalate dehydratase large subunit of Buchnera aphidicola subsp. Baizongia pistaciae (strain Bp).